A 1031-amino-acid polypeptide reads, in one-letter code: Error-prone DNA polymerase (1031 aa).

This sequence belongs to the DNA polymerase type-C family. DnaE2 subfamily.

The protein localises to the cytoplasm. It carries out the reaction DNA(n) + a 2'-deoxyribonucleoside 5'-triphosphate = DNA(n+1) + diphosphate. Its function is as follows. DNA polymerase involved in damage-induced mutagenesis and translesion synthesis (TLS). It is not the major replicative DNA polymerase. This chain is Error-prone DNA polymerase, found in Pseudomonas aeruginosa (strain ATCC 15692 / DSM 22644 / CIP 104116 / JCM 14847 / LMG 12228 / 1C / PRS 101 / PAO1).